The primary structure comprises 199 residues: Peroxiredoxin-1 (199 aa).

Ser-2 carries the N-acetylserine modification. Positions 6 to 165 constitute a Thioredoxin domain; the sequence is AKIGYPAPNF…ILRLVQAFQF (160 aa). N6-acetyllysine; alternate is present on Lys-7. Lys-7 is covalently cross-linked (Glycyl lysine isopeptide (Lys-Gly) (interchain with G-Cter in SUMO2); alternate). Lys-16 carries the post-translational modification N6-acetyllysine. Ser-32 is modified (phosphoserine). Cys-52 functions as the Cysteine sulfenic acid (-SOH) intermediate in the catalytic mechanism. Thr-90 bears the Phosphothreonine mark. Lys-120 participates in a covalent cross-link: Glycyl lysine isopeptide (Lys-Gly) (interchain with G-Cter in SUMO2). Lys-136 bears the N6-acetyllysine mark. The interval 176–199 is disordered; it reads GWKPGSDTIKPDVQKSKEYFSKQK. The span at 184 to 199 shows a compositional bias: basic and acidic residues; it reads IKPDVQKSKEYFSKQK. Residue Lys-185 forms a Glycyl lysine isopeptide (Lys-Gly) (interchain with G-Cter in SUMO1) linkage. An N6-acetyllysine modification is found at Lys-197.

The protein belongs to the peroxiredoxin family. AhpC/Prx1 subfamily. As to quaternary structure, homodimer; disulfide-linked, upon oxidation. 5 homodimers assemble to form a ring-like decamer. Interacts with GDPD5; forms a mixed-disulfide with GDPD5. Interacts with SESN1 and SESN2. Interacts with FAM107A. Phosphorylated on Thr-90 during the M-phase, which leads to a decrease in enzymatic activity. Post-translationally, acetylation increases reducing activity and resistance to superoxidation. Deacetylated by HDAC6 which decreases reducing activity.

It is found in the cytoplasm. It catalyses the reaction a hydroperoxide + [thioredoxin]-dithiol = an alcohol + [thioredoxin]-disulfide + H2O. Its function is as follows. Thiol-specific peroxidase that catalyzes the reduction of hydrogen peroxide and organic hydroperoxides to water and alcohols, respectively. Plays a role in cell protection against oxidative stress by detoxifying peroxides and as sensor of hydrogen peroxide-mediated signaling events. Might participate in the signaling cascades of growth factors and tumor necrosis factor-alpha by regulating the intracellular concentrations of H(2)O(2). Reduces an intramolecular disulfide bond in GDPD5 that gates the ability to GDPD5 to drive postmitotic motor neuron differentiation. This chain is Peroxiredoxin-1 (PRDX1), found in Cricetulus griseus (Chinese hamster).